The following is a 257-amino-acid chain: Hydroxyacylglutathione hydrolase (257 aa).

Zn(2+) is bound by residues histidine 53, histidine 55, aspartate 57, histidine 58, histidine 109, aspartate 126, and histidine 164.

It belongs to the metallo-beta-lactamase superfamily. Glyoxalase II family. In terms of assembly, monomer. It depends on Zn(2+) as a cofactor.

The enzyme catalyses an S-(2-hydroxyacyl)glutathione + H2O = a 2-hydroxy carboxylate + glutathione + H(+). It functions in the pathway secondary metabolite metabolism; methylglyoxal degradation; (R)-lactate from methylglyoxal: step 2/2. In terms of biological role, thiolesterase that catalyzes the hydrolysis of S-D-lactoyl-glutathione to form glutathione and D-lactic acid. The protein is Hydroxyacylglutathione hydrolase of Baumannia cicadellinicola subsp. Homalodisca coagulata.